The primary structure comprises 122 residues: Ig heavy chain V region M603 (122 aa).

The Ig-like domain occupies 1–121 (EVKLVESGGG…WGAGTTVTVS (121 aa)).

In Mus musculus (Mouse), this protein is Ig heavy chain V region M603.